A 227-amino-acid chain; its full sequence is CDP-diacylglycerol--glycerol-3-phosphate 3-phosphatidyltransferase (227 aa).

5 helical membrane-spanning segments follow: residues 30 to 50 (IFIA…GSVA), 58 to 78 (VTIH…TAVI), 112 to 132 (VLIA…VIVL), 159 to 179 (WKTT…SFSL), and 192 to 212 (WAIV…SFGI).

This sequence belongs to the CDP-alcohol phosphatidyltransferase class-I family.

The protein localises to the cell membrane. The enzyme catalyses a CDP-1,2-diacyl-sn-glycerol + sn-glycerol 3-phosphate = a 1,2-diacyl-sn-glycero-3-phospho-(1'-sn-glycero-3'-phosphate) + CMP + H(+). Its pathway is phospholipid metabolism; phosphatidylglycerol biosynthesis; phosphatidylglycerol from CDP-diacylglycerol: step 1/2. Functionally, this protein catalyzes the committed step to the synthesis of the acidic phospholipids. This is CDP-diacylglycerol--glycerol-3-phosphate 3-phosphatidyltransferase (pgsA) from Mycoplasma pneumoniae (strain ATCC 29342 / M129 / Subtype 1) (Mycoplasmoides pneumoniae).